A 314-amino-acid chain; its full sequence is Taste receptor type 2 member 42 (314 aa).

Residues 1 to 7 (MATELDK) are Extracellular-facing. The chain crosses the membrane as a helical span at residues 8 to 28 (IFLILAIAEFIISMLGNVFIG). Topologically, residues 29–50 (LVNCSEGIKNQKVFSADFILTC) are cytoplasmic. A helical transmembrane segment spans residues 51–71 (LAISTIGQLLVILFDSFLVGL). The Extracellular segment spans residues 72–101 (ASHLYTTYRLGKTVIMLWHMTNHLTTWLAT). A helical membrane pass occupies residues 102–122 (CLSIFYFFKIAHFPHSLFLWL). The Cytoplasmic portion of the chain corresponds to 123–127 (RWRMN). The helical transmembrane segment at 128-148 (GMIVMLLILSLFLLIFDSLVL) threads the bilayer. Residues 149–187 (EIFIDISLNIIDKSNLTLYLDESKTLYDKLSILKTLLSL) are Extracellular-facing. Asn-163 carries an N-linked (GlcNAc...) asparagine glycan. The chain crosses the membrane as a helical span at residues 188–208 (TSFIPFSLFLTSLLFLFLSLV). Residues 209-238 (RHTRNLKLSSLGSRDSSTEAHRRAMKMVMS) are Cytoplasmic-facing. Residues 239–259 (FLFLFIVHFFSLQVANWIFFM) form a helical membrane-spanning segment. At 260–265 (LWNNKC) the chain is on the extracellular side. The helical transmembrane segment at 266–286 (IKFVMLALNAFPSCHSFILIL) threads the bilayer. Topologically, residues 287–314 (GNSKLQQTAVRLLWHLRNYTKTPNPLPL) are cytoplasmic.

This sequence belongs to the G-protein coupled receptor T2R family.

Its subcellular location is the membrane. Its function is as follows. Receptor that may play a role in the perception of bitterness and is gustducin-linked. May play a role in sensing the chemical composition of the gastrointestinal content. The activity of this receptor may stimulate alpha gustducin, mediate PLC-beta-2 activation and lead to the gating of TRPM5. This is Taste receptor type 2 member 42 (TAS2R42) from Homo sapiens (Human).